We begin with the raw amino-acid sequence, 302 residues long: Putative S-adenosyl-L-methionine-dependent methyltransferase MAP_1622c (302 aa).

S-adenosyl-L-methionine-binding positions include Asp-129 and 158–159 (DL).

It belongs to the UPF0677 family.

In terms of biological role, exhibits S-adenosyl-L-methionine-dependent methyltransferase activity. The chain is Putative S-adenosyl-L-methionine-dependent methyltransferase MAP_1622c from Mycolicibacterium paratuberculosis (strain ATCC BAA-968 / K-10) (Mycobacterium paratuberculosis).